The chain runs to 330 residues: Probable aldo-keto reductase 6 (330 aa).

The active-site Proton donor is the Tyr-64. His-132 lines the substrate pocket. Residue 211–221 (SPLGRGFLGLP) participates in NADP(+) binding.

It belongs to the aldo/keto reductase family.

This is Probable aldo-keto reductase 6 from Arabidopsis thaliana (Mouse-ear cress).